Consider the following 141-residue polypeptide: Putative pre-16S rRNA nuclease (141 aa).

Belongs to the YqgF nuclease family.

The protein resides in the cytoplasm. Its function is as follows. Could be a nuclease involved in processing of the 5'-end of pre-16S rRNA. This Sodalis glossinidius (strain morsitans) protein is Putative pre-16S rRNA nuclease.